Here is a 1042-residue protein sequence, read N- to C-terminus: Disintegrin and metalloproteinase domain-containing protein unc-71 (1042 aa).

An N-terminal signal peptide occupies residues 1–23 (MICASKITMLGLLVMCTLGGVLG). The Extracellular segment spans residues 24-746 (KVDIRQTTAN…NIGTTLETAT (723 aa)). Asn-103 and Asn-155 each carry an N-linked (GlcNAc...) asparagine glycan. The 205-residue stretch at 227 to 431 (KYVEVALIAD…GNIQCLLNKP (205 aa)) folds into the Peptidase M12B domain. Intrachain disulfides connect Cys-338-Cys-426, Cys-378-Cys-410, Cys-380-Cys-386, and Cys-496-Cys-516. One can recognise a Disintegrin domain in the interval 437–524 (LRECGNGVVD…DCPPDGHLID (88 aa)). Residue Asn-538 is glycosylated (N-linked (GlcNAc...) asparagine). Positions 662–699 (SATACPTNNLALLCSGHGHCTTTARCVCFNGWSGVACD) constitute an EGF-like domain. 3 disulfide bridges follow: Cys-666–Cys-681, Cys-675–Cys-687, and Cys-689–Cys-698. Asn-703 carries N-linked (GlcNAc...) asparagine glycosylation. The chain crosses the membrane as a helical span at residues 747–767 (LFAILLGFGVFLLLCLVCLML). Residues 768 to 1042 (CYRRRSVVEI…KLEMTNSMHN (275 aa)) are Cytoplasmic-facing. Disordered regions lie at residues 779–809 (KPSD…RKRK), 825–850 (DERD…RRNG), and 980–1028 (HDVG…PSLF). Basic and acidic residues predominate over residues 825–836 (DERDSTSLRSRD). Residues 1002 to 1027 (DSPTLVNGASSSSTSNNYNFRQSPSL) show a composition bias toward polar residues.

The protein resides in the cell membrane. Its function is as follows. Involved in the migration of sex myoblasts (progenitors of egg-laying muscles), Q neuroblasts and BDU interneurons during development. Involved in axon branching and guidance of neurons including GABAergic type D motor neurons. Promotes sex myoblast migration and positioning independently of gonad attraction cues. May act downstream of mig-13 in order to promote the guidance, migration and positioning of Q neuroblasts and their descendants along the anteroposterior body axis. Required for coordinated movements. This chain is Disintegrin and metalloproteinase domain-containing protein unc-71, found in Caenorhabditis elegans.